Here is a 464-residue protein sequence, read N- to C-terminus: Mitogen-activated protein kinase 10 (464 aa).

Residues 64–359 enclose the Protein kinase domain; sequence YQNLKPIGSG…VDDALQHPYI (296 aa). Residues 70–78 and lysine 93 each bind ATP; that span reads IGSGAQGIV. Aspartate 189 functions as the Proton acceptor in the catalytic mechanism. Phosphothreonine; by MAP2K7 is present on threonine 221. The TXY signature appears at 221–223; it reads TPY. Tyrosine 223 bears the Phosphotyrosine; by MAP2K4 mark. The segment at 405-464 is disordered; the sequence is TKNGVVKGQPSPSGAAVNSSESLPPSSSVNDISSMSTDQTLASDTDSSLEASAGPLGCCR. Over residues 423–432 the composition is skewed to low complexity; sequence SSESLPPSSS. Residues 433-454 show a composition bias toward polar residues; that stretch reads VNDISSMSTDQTLASDTDSSLE. Residues cysteine 462 and cysteine 463 are each lipidated (S-palmitoyl cysteine).

It belongs to the protein kinase superfamily. CMGC Ser/Thr protein kinase family. MAP kinase subfamily. In terms of assembly, interacts with MAPK8IP1/JIP-1 and MAPK8IP3/JIP-3/JSAP1. Interacts with SPAG9/MAPK8IP4/JIP4. Interacts with HDAC9 and MAPKBP1. Interacts with ARRB2; the interaction enhances MAPK10 activation by MAP3K5. Interacts with SARM1. Interacts with JUND; interaction is inhibited in the presence of MEN1. Mg(2+) is required as a cofactor. Post-translationally, dually phosphorylated on Thr-221 and Tyr-223 by MAP2K4 and MAP2K7, which activates the enzyme. MAP2K7 shows a strong preference for Thr-221 while MAP2K4 phosphorylates Tyr-223 preferentially. Weakly autophosphorylated on threonine and tyrosine residues in vitro. Palmitoylation regulates subcellular location and axonal development.

The protein resides in the cytoplasm. It is found in the membrane. It localises to the nucleus. Its subcellular location is the mitochondrion. The catalysed reaction is L-seryl-[protein] + ATP = O-phospho-L-seryl-[protein] + ADP + H(+). It catalyses the reaction L-threonyl-[protein] + ATP = O-phospho-L-threonyl-[protein] + ADP + H(+). Its activity is regulated as follows. Activated by threonine and tyrosine phosphorylation by two dual specificity kinases, MAP2K4 and MAP2K7. MAP2K7 phosphorylates MAPK10 on Thr-221 causing a conformational change and a large increase in Vmax for the enzyme. MAP2K4 then phosphorylates Tyr-223 resulting in a further increase in Vmax. Inhibited by dual specificity phosphatases, such as DUSP1. Inhibited by HDAC9. Functionally, serine/threonine-protein kinase involved in various processes such as neuronal proliferation, differentiation, migration and programmed cell death. Extracellular stimuli such as pro-inflammatory cytokines or physical stress stimulate the stress-activated protein kinase/c-Jun N-terminal kinase (SAP/JNK) signaling pathway. In this cascade, two dual specificity kinases MAP2K4/MKK4 and MAP2K7/MKK7 phosphorylate and activate MAPK10/JNK3. In turn, MAPK10/JNK3 phosphorylates a number of transcription factors, primarily components of AP-1 such as JUN and ATF2 and thus regulates AP-1 transcriptional activity. Plays regulatory roles in the signaling pathways during neuronal apoptosis. Phosphorylates the neuronal microtubule regulator STMN2. Acts in the regulation of the amyloid-beta precursor protein/APP signaling during neuronal differentiation by phosphorylating APP. Also participates in neurite growth in spiral ganglion neurons. Phosphorylates the CLOCK-BMAL1 heterodimer and plays a role in the photic regulation of the circadian clock. Phosphorylates JUND and this phosphorylation is inhibited in the presence of MEN1. The polypeptide is Mitogen-activated protein kinase 10 (Mapk10) (Rattus norvegicus (Rat)).